The sequence spans 144 residues: Large ribosomal subunit protein uL15 (144 aa).

The disordered stretch occupies residues 1 to 59; that stretch reads MHLNTLAPAPGAKKSSKRVGRGMGSGLGKTGGRGHKGQKSRSGGSVKPGFEGGQMPIQR. Over residues 21-31 the composition is skewed to gly residues; it reads RGMGSGLGKTG.

The protein belongs to the universal ribosomal protein uL15 family. Part of the 50S ribosomal subunit.

In terms of biological role, binds to the 23S rRNA. This chain is Large ribosomal subunit protein uL15, found in Pseudoalteromonas atlantica (strain T6c / ATCC BAA-1087).